A 61-amino-acid polypeptide reads, in one-letter code: Putative neurotoxin-A (61 aa).

An N-terminal signal peptide occupies residues M1–A19. Disulfide bonds link C31-C50, C36-C55, and C40-C57.

Belongs to the short scorpion toxin superfamily. Expressed by the venom gland.

It is found in the secreted. This Lychas mucronatus (Chinese swimming scorpion) protein is Putative neurotoxin-A.